The following is a 396-amino-acid chain: Elongation factor Tu (396 aa).

A tr-type G domain is found at lysine 10–glutamine 206. Residues glycine 19 to threonine 26 are G1. Glycine 19–threonine 26 provides a ligand contact to GTP. Threonine 26 provides a ligand contact to Mg(2+). A G2 region spans residues glycine 60–alanine 64. Residues aspartate 81–glycine 84 form a G3 region. GTP contacts are provided by residues aspartate 81–histidine 85 and asparagine 136–aspartate 139. The interval asparagine 136 to aspartate 139 is G4. The interval serine 174–leucine 176 is G5.

This sequence belongs to the TRAFAC class translation factor GTPase superfamily. Classic translation factor GTPase family. EF-Tu/EF-1A subfamily. In terms of assembly, monomer.

It is found in the cytoplasm. It catalyses the reaction GTP + H2O = GDP + phosphate + H(+). Functionally, GTP hydrolase that promotes the GTP-dependent binding of aminoacyl-tRNA to the A-site of ribosomes during protein biosynthesis. This is Elongation factor Tu from Nitrosococcus oceani (strain ATCC 19707 / BCRC 17464 / JCM 30415 / NCIMB 11848 / C-107).